Here is a 464-residue protein sequence, read N- to C-terminus: MFSYFRKSQQKVEENQNGGGGDGRGSGIKVELQTNINSRDLKNEHSDPKFKFSPLRSTDVHLEDYDNEKYKLKFIQIVTRHGRRTPESNRTPLTMWMCNSMDHLISNKDSPRPNCNPGQLTVLGIVDQINVGKIYRKLFIDHLGFLDSQYNKDQIFIRSTNTTRTISSARSLMHGLYGGSFTDEQEKSPHHSSFLVKPDNEENMYPRNSKKLVFLKNLIKQHPKVIKENQLSELEKFTEKINKIFENSKPEESSFRARGFRSYAGLVNSFDCFRNNGLPIPKGLTKDIIQRMYEESAKEFKSARYFPEMSILGIGRFVDDLNKELKLKARNDPSVKDLKLSLYSGHDTTLAALLVGYDMYEDKIHPVTSSTLEFLLMQDKDYKEPEVVKITKSIEKELINHQYVKVIYNHKPIHIGPCKDKEVDGMCPLSEFLKISQSIIPTNYDEQSKLTQLDKKRYLSLIED.

The interval Met-1 to Lys-29 is disordered. Positions Asn-17–Ser-26 are enriched in gly residues. Residue His-81 is the Nucleophile of the active site. Residues Ser-180–Glu-202 are disordered. Asp-347 serves as the catalytic Proton donor.

This sequence belongs to the histidine acid phosphatase family.

It catalyses the reaction a phosphate monoester + H2O = an alcohol + phosphate. This chain is Probable acid phosphatase DDB_G0284753, found in Dictyostelium discoideum (Social amoeba).